Consider the following 214-residue polypeptide: Ribosomal RNA small subunit methyltransferase G (214 aa).

S-adenosyl-L-methionine contacts are provided by residues G81, M86, 132–133 (VE), and R147.

It belongs to the methyltransferase superfamily. RNA methyltransferase RsmG family.

The protein localises to the cytoplasm. It catalyses the reaction guanosine(527) in 16S rRNA + S-adenosyl-L-methionine = N(7)-methylguanosine(527) in 16S rRNA + S-adenosyl-L-homocysteine. Its function is as follows. Specifically methylates the N7 position of guanine in position 527 of 16S rRNA. This Pseudomonas paraeruginosa (strain DSM 24068 / PA7) (Pseudomonas aeruginosa (strain PA7)) protein is Ribosomal RNA small subunit methyltransferase G.